The primary structure comprises 1676 residues: Protein TIC 214 (1676 aa).

6 consecutive transmembrane segments (helical) span residues 23–43 (AGPL…PIAP), 71–91 (GILI…FLSI), 96–116 (LYMI…YMFF), 145–165 (AFLD…SPVM), 179–199 (VSLF…MFVL), and 226–246 (IFPP…PVSF).

Belongs to the TIC214 family. In terms of assembly, part of the Tic complex.

The protein resides in the plastid. It localises to the chloroplast inner membrane. Its function is as follows. Involved in protein precursor import into chloroplasts. May be part of an intermediate translocation complex acting as a protein-conducting channel at the inner envelope. The protein is Protein TIC 214 of Zygnema circumcarinatum (Green alga).